Reading from the N-terminus, the 248-residue chain is Neurovirulence factor ICP34.5 (248 aa).

Basic residues predominate over residues 1–14; sequence MARRRRHRGPRRPR. The interval 1–16 is required for nucleolar localization; it reads MARRRRHRGPRRPRPP. Disordered stretches follow at residues 1 to 129 and 149 to 174; these read MARR…FRLP and RRAGGEGAPEPPATPATPATPATPAT. The span at 24 to 35 shows a compositional bias: polar residues; the sequence is TAQSQVTSTPNS. Pro residues predominate over residues 45–58; that stretch reads AAPPPPPAGGPPPS. Over residues 73–83 the composition is skewed to acidic residues; that stretch reads ASDDDDDDDWP. Composition is skewed to pro residues over residues 84–93 and 119–128; these read DSPPPEPAPE and SHPPSRPFRL. The short motif at 128–137 is the Nuclear export signal element; it reads LPPRLALRLR. A run of 5 repeats spans residues 161–163, 164–166, 167–169, 170–172, and 173–175. The tract at residues 161-175 is 5 X 3 AA tandem repeats of A-T-P; it reads ATPATPATPATPATP. A compositionally biased stretch (low complexity) spans 164 to 174; the sequence is ATPATPATPAT. A binding to PP1CA region spans residues 175 to 188; the sequence is PARVRFSPHVRVRH. Residues 175-188 are interaction with host PPP1CA; the sequence is PARVRFSPHVRVRH. The important for interferon resistance stretch occupies residues 190 to 248; that stretch reads VVWASAARLARRGSWARERADRARFRRRVAEAEAVIGPCLGPEARARALARGAGPANSV. A Bipartite nuclear localization signal motif is present at residues 200–218; it reads RRGSWARERADRARFRRRV. Residues 218-233 are interaction with host EIF2S1/EIF-2ALPHA; it reads VAEAEAVIGPCLGPEA.

It belongs to the PPP1R15 family. Interacts with host PPP1CA; this interaction forms a high-molecular-weight complex that dephosphorylates EIF2S1/eIF-2alpha. Interacts with host EIF2S1/eIF-2alpha; this interaction is crucial for the specific dephosphorylation of EIF2S1/eIF-2alpha by PPP1CA. Binds to proliferating cell nuclear antigen (PCNA), which may release host cells from growth arrest and facilitate viral replication. Interacts (via N-terminus) with host C1QBP; this interaction allows C1QBP to be recruited to the inner nuclear membrane by ICP34.5. Interacts with host PRKCA. Interacts with protein UL31. Interacts with host STING/TMEM173; this interaction inhibits the intracellular DNA sensing pathway. Interacts with host BECN1; this interaction modulates host autophagy.

It is found in the host cytoplasm. Its subcellular location is the host nucleus. It localises to the host nucleolus. The protein resides in the virion. Functionally, inhibits the establishment of the immune response and of the integrated stress response (ISR) in the infected cell. Plays essential roles in viral nuclear egress to mediate capsid transit across the nuclear membrane. Facilitates nuclear egress cooperatively with host C1QBP and protein kinase C/PKC to induce lamin A/C phosphorylation and subsequent reorganization. In turn, lamina disassembles and nuclear egress occurs. Recruits the serine/threonine protein phosphatase PPP1CA/PP1-alpha to dephosphorylate the translation initiation factor EIF2S1/eIF-2alpha, thereby couteracting the host shutoff of protein synthesis involving double-stranded RNA-dependent protein kinase EIF2AK2/PKR. In turn, controls host IRF3 activation and subsequently inhibits host interferon response. Controls the DNA sensing pathway by interacting with and inhibiting host STING/TMEM173. Also down-modulates the host MHC class II proteins cell surface expression. Acts as a neurovirulence factor that has a profound effect on the growth of the virus in central nervous system tissue, by interacting with host BECN1 and thereby antagonizing the host autophagy response. In Homo sapiens (Human), this protein is Neurovirulence factor ICP34.5 (ICP34.5).